A 312-amino-acid polypeptide reads, in one-letter code: Olfactory receptor 2J1 (312 aa).

At 1–26 the chain is on the extracellular side; that stretch reads MLMKKNASFEDFFLLLGFSNWPHLEV. Asn6 carries an N-linked (GlcNAc...) asparagine glycan. The chain crosses the membrane as a helical span at residues 27–50; sequence VLFVVILIFYLITLIGNLFIIILS. Over 51–58 the chain is Cytoplasmic; that stretch reads YLDSHLHT. Residues 59-80 traverse the membrane as a helical segment; the sequence is PMYFFLSNLSFLDLCYTTSSIP. Topologically, residues 81–101 are extracellular; the sequence is QLLVNLWGPEKTISYAGCTVQ. An intrachain disulfide couples Cys98 to Cys190. A helical transmembrane segment spans residues 102–121; it reads LYFVLALGTAECVLLVVMSY. Residues 122 to 140 are Cytoplasmic-facing; the sequence is DRYAAVCRPLHYTVLMHPR. A helical transmembrane segment spans residues 141–159; it reads FCRLLAAASWVSGFTTSAL. The Extracellular segment spans residues 160–196; sequence HSSFTFWIPLCRHRLVDHFFCEVPALLRLSCVDTQAN. The chain crosses the membrane as a helical span at residues 197–220; sequence ELTLMVMSSIFVLIPLILILTSYG. Over 221–237 the chain is Cytoplasmic; that stretch reads AIARAVLSMQSTTGLQK. A helical transmembrane segment spans residues 238 to 260; sequence VLRTCGAHLMVVSLFFIPVMCMY. The Extracellular portion of the chain corresponds to 261 to 273; that stretch reads LQPPSENSQDQGK. A helical transmembrane segment spans residues 274 to 293; sequence FIALFYTVVTPSLNPLIYTF. The Cytoplasmic portion of the chain corresponds to 294–312; sequence RNKDVRGAVKRLMGWEWGM.

This sequence belongs to the G-protein coupled receptor 1 family.

It localises to the cell membrane. Odorant receptor. The chain is Olfactory receptor 2J1 (OR2J1) from Homo sapiens (Human).